The chain runs to 132 residues: Small ribosomal subunit protein uS8 (132 aa).

The protein belongs to the universal ribosomal protein uS8 family. In terms of assembly, part of the 30S ribosomal subunit. Contacts proteins S5 and S12.

Its function is as follows. One of the primary rRNA binding proteins, it binds directly to 16S rRNA central domain where it helps coordinate assembly of the platform of the 30S subunit. The chain is Small ribosomal subunit protein uS8 from Agrobacterium fabrum (strain C58 / ATCC 33970) (Agrobacterium tumefaciens (strain C58)).